The following is a 318-amino-acid chain: Protease HtpX homolog (318 aa).

A run of 2 helical transmembrane segments spans residues 6–26 (TAML…LIGG) and 28–48 (GGMM…YWNS). Zn(2+) is bound at residue His130. Glu131 is an active-site residue. Residue His134 coordinates Zn(2+). 2 helical membrane passes run 145–165 (ITAT…FFGG) and 173–193 (PLGF…AMLV). Zn(2+) is bound at residue Glu202. Residues 284–318 (NVSTGPVRAVNPTRKSRSVPNTGRGGSQPPRGPWS) form a disordered region.

The protein belongs to the peptidase M48B family. Zn(2+) is required as a cofactor.

The protein resides in the cell inner membrane. This chain is Protease HtpX homolog, found in Rhizobium etli (strain ATCC 51251 / DSM 11541 / JCM 21823 / NBRC 15573 / CFN 42).